Reading from the N-terminus, the 30-residue chain is Acyl-CoA-binding protein 1 (30 aa).

Residues 1-15 are compositionally biased toward basic and acidic residues; that stretch reads ALKDEFEEHAEKAKT. The interval 1 to 30 is disordered; sequence ALKDEFEEHAEKAKTLPENTSNENKLILYG. The 29-residue stretch at 2–30 folds into the ACB domain; sequence LKDEFEEHAEKAKTLPENTSNENKLILYG.

This sequence belongs to the ACBP family.

The protein localises to the cytoplasm. In terms of biological role, binds medium- and long-chain acyl-CoA esters with very high affinity and may function as an intracellular carrier of acyl-CoA esters. The polypeptide is Acyl-CoA-binding protein 1 (Digitalis lanata (Grecian foxglove)).